Here is a 371-residue protein sequence, read N- to C-terminus: Dihydroorotate dehydrogenase (quinone) (371 aa).

Residues Ala-79 to Lys-83 and Thr-103 contribute to the FMN site. Lys-83 is a binding site for substrate. Asn-128–Phe-132 lines the substrate pocket. Asn-156 and Asn-189 together coordinate FMN. Asn-189 contacts substrate. Ser-192 (nucleophile) is an active-site residue. Asn-194 lines the substrate pocket. FMN-binding residues include Lys-225 and Thr-253. Asn-254 to Thr-255 contacts substrate. Residues Gly-279, Gly-308, and Tyr-329–Thr-330 contribute to the FMN site.

The protein belongs to the dihydroorotate dehydrogenase family. Type 2 subfamily. In terms of assembly, monomer. FMN serves as cofactor.

The protein localises to the cell membrane. It catalyses the reaction (S)-dihydroorotate + a quinone = orotate + a quinol. The protein operates within pyrimidine metabolism; UMP biosynthesis via de novo pathway; orotate from (S)-dihydroorotate (quinone route): step 1/1. Catalyzes the conversion of dihydroorotate to orotate with quinone as electron acceptor. The polypeptide is Dihydroorotate dehydrogenase (quinone) (Corynebacterium glutamicum (strain ATCC 13032 / DSM 20300 / JCM 1318 / BCRC 11384 / CCUG 27702 / LMG 3730 / NBRC 12168 / NCIMB 10025 / NRRL B-2784 / 534)).